A 203-amino-acid polypeptide reads, in one-letter code: UPF0637 protein SH1846 (203 aa).

Belongs to the UPF0637 family.

The polypeptide is UPF0637 protein SH1846 (Staphylococcus haemolyticus (strain JCSC1435)).